Consider the following 106-residue polypeptide: Transcriptional and immune response regulator (106 aa).

In terms of assembly, monomer. Interacts with NOTCH2 (via ANK repeats), the interaction inhibits the nuclear translocation of NOTCH2 N2ICD. Interacts (C-terminus) with CBY1 (C-terminus), TCIM competes with CTNNB1 for the interaction with CBY1. As to expression, expressed in liver, expression levels decrease in regenerating liver. In bone marrow, expressed in large progenitor-like cells, cells with ring-shaped nuclei and, at lower, levels in hematopietic stem cell-like cells with round nuclei (at protein level).

It localises to the cytoplasm. It is found in the nucleus. The protein localises to the nucleolus. The protein resides in the nucleus speckle. Seems to be involved in the regulation of cell growth an differentiation, may play different and opposite roles depending on the tissue or cell type. May enhance the WNT-CTNNB1 pathway by relieving antagonistic activity of CBY1. Enhances the proliferation of follicular dendritic cells. Plays a role in the mitogen-activated MAPK2/3 signaling pathway, positively regulates G1-to-S-phase transition of the cell cycle. In endothelial cells, enhances key inflammatory mediators and inflammatory response through the modulation of NF-kappaB transcriptional regulatory activity. Involved in the regulation of heat shock response, seems to play a positive feedback with HSF1 to modulate heat-shock downstream gene expression. Plays a role in the regulation of hematopoiesis even if the mechanisms are unknown. In cancers such as thyroid or lung cancer, it has been described as promoter of cell proliferation, G1-to-S-phase transition and inhibitor of apoptosis. However, it negatively regulates self-renewal of liver cancer cells via suppresion of NOTCH2 signaling. In Mus musculus (Mouse), this protein is Transcriptional and immune response regulator.